Reading from the N-terminus, the 461-residue chain is Phosphomethylpyrimidine synthase (461 aa).

Residues N81, M110, Y140, H176, 196–198 (SRG), 237–240 (DSLR), and E276 contribute to the substrate site. H280 lines the Zn(2+) pocket. Y303 lines the substrate pocket. Residue H344 participates in Zn(2+) binding. Residues C424, C427, and C432 each coordinate [4Fe-4S] cluster.

Belongs to the ThiC family. [4Fe-4S] cluster is required as a cofactor.

The catalysed reaction is 5-amino-1-(5-phospho-beta-D-ribosyl)imidazole + S-adenosyl-L-methionine = 4-amino-2-methyl-5-(phosphooxymethyl)pyrimidine + CO + 5'-deoxyadenosine + formate + L-methionine + 3 H(+). It participates in cofactor biosynthesis; thiamine diphosphate biosynthesis. Catalyzes the synthesis of the hydroxymethylpyrimidine phosphate (HMP-P) moiety of thiamine from aminoimidazole ribotide (AIR) in a radical S-adenosyl-L-methionine (SAM)-dependent reaction. The chain is Phosphomethylpyrimidine synthase from Thermosynechococcus vestitus (strain NIES-2133 / IAM M-273 / BP-1).